The following is an 840-amino-acid chain: Leucine--tRNA ligase (840 aa).

The 'HIGH' region motif lies at Pro44 to His55. The 'KMSKS' region signature appears at Lys617–Ser621. Position 620 (Lys620) interacts with ATP.

This sequence belongs to the class-I aminoacyl-tRNA synthetase family.

The protein localises to the cytoplasm. It catalyses the reaction tRNA(Leu) + L-leucine + ATP = L-leucyl-tRNA(Leu) + AMP + diphosphate. The polypeptide is Leucine--tRNA ligase (Borreliella burgdorferi (strain ATCC 35210 / DSM 4680 / CIP 102532 / B31) (Borrelia burgdorferi)).